A 338-amino-acid chain; its full sequence is 3-phosphoshikimate 1-carboxyvinyltransferase 2 (338 aa).

Arginine 25 contacts phosphoenolpyruvate. 3-phosphoshikimate-binding residues include serine 72, serine 73, glutamine 74, serine 100, aspartate 225, and lysine 252. Glutamine 74 provides a ligand contact to phosphoenolpyruvate. Aspartate 225 serves as the catalytic Proton acceptor. Phosphoenolpyruvate is bound by residues arginine 256, arginine 298, and lysine 323.

This sequence belongs to the EPSP synthase family.

Its subcellular location is the plastid. The protein resides in the chloroplast. The enzyme catalyses 3-phosphoshikimate + phosphoenolpyruvate = 5-O-(1-carboxyvinyl)-3-phosphoshikimate + phosphate. It participates in metabolic intermediate biosynthesis; chorismate biosynthesis; chorismate from D-erythrose 4-phosphate and phosphoenolpyruvate: step 6/7. Catalyzes the transfer of the enolpyruvyl moiety of phosphoenolpyruvate (PEP) to the 5-hydroxyl of shikimate-3-phosphate (S3P) to produce enolpyruvyl shikimate-3-phosphate and inorganic phosphate. The protein is 3-phosphoshikimate 1-carboxyvinyltransferase 2 (EPSPS-2) of Nicotiana tabacum (Common tobacco).